Consider the following 86-residue polypeptide: Putative pro-MCH-like protein 1 (86 aa).

The NGE-like stretch occupies residues 31 to 49; that stretch reads GSVAFPAENGVQDTESTQE. The segment at 38–62 is disordered; it reads ENGVQDTESTQEKRETGDEENSAKF. Residues 52–64 are NEI-like; the sequence is ETGDEENSAKFPV. Residues 68-86 are melanin-concentrating hormone-like; sequence DFDTLSCMLGRVYQSCWQV.

Belongs to the melanin-concentrating hormone family. In terms of tissue distribution, expressed in testis and brain.

This chain is Putative pro-MCH-like protein 1 (PMCHL1), found in Homo sapiens (Human).